The sequence spans 602 residues: Aspartate--tRNA(Asp/Asn) ligase (602 aa).

L-aspartate is bound at residue E170. Residues 194–197 form an aspartate region; the sequence is QLFK. R216 is an L-aspartate binding site. ATP-binding positions include 216 to 218 and Q225; that span reads RDE. H448 provides a ligand contact to L-aspartate. E482 lines the ATP pocket. Residue R489 participates in L-aspartate binding. 534–537 contributes to the ATP binding site; that stretch reads GWDR. The tract at residues 559-602 is disordered; the sequence is GGVDPLTSAPAPITAQQRKESGVDAKPEPKGDAAAAKPQVSAEK. Residues 575-589 are compositionally biased toward basic and acidic residues; sequence QRKESGVDAKPEPKG.

This sequence belongs to the class-II aminoacyl-tRNA synthetase family. Type 1 subfamily. As to quaternary structure, homodimer.

The protein localises to the cytoplasm. It catalyses the reaction tRNA(Asx) + L-aspartate + ATP = L-aspartyl-tRNA(Asx) + AMP + diphosphate. Its function is as follows. Aspartyl-tRNA synthetase with relaxed tRNA specificity since it is able to aspartylate not only its cognate tRNA(Asp) but also tRNA(Asn). Reaction proceeds in two steps: L-aspartate is first activated by ATP to form Asp-AMP and then transferred to the acceptor end of tRNA(Asp/Asn). This Rhodococcus opacus (strain B4) protein is Aspartate--tRNA(Asp/Asn) ligase.